The sequence spans 148 residues: Probable histone H2A.1 (148 aa).

A compositionally biased stretch (basic residues) spans 1 to 23; sequence MDASTKTKKGAGGRKGGPRKKSV. Disordered stretches follow at residues 1 to 28 and 127 to 148; these read MDASTKTKKGAGGRKGGPRKKSVTRSTR and KNEKAATTTKSPSKATKSPKKA. The span at 131 to 142 shows a compositional bias: low complexity; the sequence is AATTTKSPSKAT. Short sequence motifs (SPKK motif) lie at residues 137-140 and 144-147; these read SPSK and SPKK.

This sequence belongs to the histone H2A family. The nucleosome is a histone octamer containing two molecules each of H2A, H2B, H3 and H4 assembled in one H3-H4 heterotetramer and two H2A-H2B heterodimers. The octamer wraps approximately 147 bp of DNA.

The protein localises to the nucleus. It is found in the chromosome. In terms of biological role, core component of nucleosome. Nucleosomes wrap and compact DNA into chromatin, limiting DNA accessibility to the cellular machineries which require DNA as a template. Histones thereby play a central role in transcription regulation, DNA repair, DNA replication and chromosomal stability. DNA accessibility is regulated via a complex set of post-translational modifications of histones, also called histone code, and nucleosome remodeling. In Medicago truncatula (Barrel medic), this protein is Probable histone H2A.1.